Here is a 579-residue protein sequence, read N- to C-terminus: Membrane protein insertase YidC (579 aa).

The chain crosses the membrane as a helical span at residues 10 to 30 (LVIVTILSALILFGWSFVTKH). Residues 35–61 (PPAPTQQGKNQPKAELTAEESGDKPLK) are disordered. The next 5 membrane-spanning stretches (helical) occupy residues 330 to 350 (FDKA…FYYL), 351 to 371 (DWLF…VFTI), 423 to 443 (VNPF…IALY), 478 to 498 (LLHF…ILGI), and 523 to 543 (PLIS…YYIF). A compositionally biased stretch (basic and acidic residues) spans 560–572 (STPEERQDRAERK). Residues 560 to 579 (STPEERQDRAERKRPSKKKA) form a disordered region.

This sequence belongs to the OXA1/ALB3/YidC family. Type 1 subfamily. Interacts with the Sec translocase complex via SecD. Specifically interacts with transmembrane segments of nascent integral membrane proteins during membrane integration.

It is found in the cell inner membrane. Functionally, required for the insertion and/or proper folding and/or complex formation of integral membrane proteins into the membrane. Involved in integration of membrane proteins that insert both dependently and independently of the Sec translocase complex, as well as at least some lipoproteins. Aids folding of multispanning membrane proteins. The sequence is that of Membrane protein insertase YidC from Zymomonas mobilis subsp. mobilis (strain ATCC 31821 / ZM4 / CP4).